The sequence spans 203 residues: ATP-dependent Clp protease proteolytic subunit 2 (203 aa).

The active-site Nucleophile is the serine 98. Residue histidine 123 is part of the active site.

This sequence belongs to the peptidase S14 family. Fourteen ClpP subunits assemble into 2 heptameric rings which stack back to back to give a disk-like structure with a central cavity, resembling the structure of eukaryotic proteasomes.

It is found in the cytoplasm. The catalysed reaction is Hydrolysis of proteins to small peptides in the presence of ATP and magnesium. alpha-casein is the usual test substrate. In the absence of ATP, only oligopeptides shorter than five residues are hydrolyzed (such as succinyl-Leu-Tyr-|-NHMec, and Leu-Tyr-Leu-|-Tyr-Trp, in which cleavage of the -Tyr-|-Leu- and -Tyr-|-Trp bonds also occurs).. Cleaves peptides in various proteins in a process that requires ATP hydrolysis. Has a chymotrypsin-like activity. Plays a major role in the degradation of misfolded proteins. In Chlamydia muridarum (strain MoPn / Nigg), this protein is ATP-dependent Clp protease proteolytic subunit 2.